The sequence spans 170 residues: Ribosome maturation factor RimM (170 aa).

The 74-residue stretch at 97–170 folds into the PRC barrel domain; sequence KNEFYWTDLI…QIRVEWGSDW (74 aa).

This sequence belongs to the RimM family. Binds ribosomal protein uS19.

The protein localises to the cytoplasm. In terms of biological role, an accessory protein needed during the final step in the assembly of 30S ribosomal subunit, possibly for assembly of the head region. Essential for efficient processing of 16S rRNA. May be needed both before and after RbfA during the maturation of 16S rRNA. It has affinity for free ribosomal 30S subunits but not for 70S ribosomes. This chain is Ribosome maturation factor RimM, found in Dechloromonas aromatica (strain RCB).